Here is a 203-residue protein sequence, read N- to C-terminus: Lectin (203 aa).

A signal peptide spans 1-20 (MINILHVIAGLALASVGVDA). The propeptide occupies 21-53 (RQVGVGADVLHAVENTIDSITGVEASHSALEVG).

Monomer.

In terms of biological role, N-acetyl-D-glucosamine-specific lectin. Specifically agglutinates rabbit erythrocytes. This Ulva pertusa (Sea lettuce) protein is Lectin (UPL1).